Reading from the N-terminus, the 116-residue chain is Omega-ctenitoxin-Pn3a (116 aa).

An N-terminal signal peptide occupies residues 1–19 (MKMKLLGIILLVSFPFVLG). Positions 20–38 (FAGIPIEEGENSVEVGEVE) are excised as a propeptide. Cystine bridges form between cysteine 41-cysteine 58, cysteine 48-cysteine 64, cysteine 55-cysteine 90, cysteine 57-cysteine 78, cysteine 66-cysteine 76, cysteine 96-cysteine 102, and cysteine 106-cysteine 111. Position 115 is a histidine amide (histidine 115).

The protein belongs to the neurotoxin 04 (omega-agtx) family. 03 (type II/III omega-agtx) subfamily. Expressed by the venom gland.

It is found in the secreted. Its function is as follows. This toxin is a potent and practically irreversible antagonist of both Cav2.1/CACNA1A and Cav2.2/CACNA1B calcium channels, while it displays a partial and rapidly reversible block of Cav2.3/CACNA1E calcium channels and no effect on Cav3/CACNA1 calcium channels. Inhibits glutamate uptake from rat brain synaptosomes by an interaction between cysteines from both glutamate transporter and toxin. Blocks potassium-induced exocytosis of synaptic vesicles in brain cortical synaptosomes (IC(50)=1.1 nM). In rat brain, inhibits glutamate release, neuronal death and loss of neurotransmission in the hippocampus resulting from ischemia. In vivo, induces rapid general flaccid paralysis followed by death in 10-30 minutes at dose levels of 5 ug per mouse. The protein is Omega-ctenitoxin-Pn3a of Phoneutria nigriventer (Brazilian armed spider).